Here is a 100-residue protein sequence, read N- to C-terminus: NADH-quinone oxidoreductase subunit K (100 aa).

3 helical membrane passes run 4–24 (LSHA…AIIV), 29–49 (LFIL…FVIV), and 60–80 (IMYI…LALL).

This sequence belongs to the complex I subunit 4L family. NDH-1 is composed of 13 different subunits. Subunits NuoA, H, J, K, L, M, N constitute the membrane sector of the complex.

The protein localises to the cell inner membrane. The catalysed reaction is a quinone + NADH + 5 H(+)(in) = a quinol + NAD(+) + 4 H(+)(out). NDH-1 shuttles electrons from NADH, via FMN and iron-sulfur (Fe-S) centers, to quinones in the respiratory chain. The immediate electron acceptor for the enzyme in this species is believed to be ubiquinone. Couples the redox reaction to proton translocation (for every two electrons transferred, four hydrogen ions are translocated across the cytoplasmic membrane), and thus conserves the redox energy in a proton gradient. This Blochmanniella pennsylvanica (strain BPEN) protein is NADH-quinone oxidoreductase subunit K.